Reading from the N-terminus, the 150-residue chain is Transcription antitermination protein NusB (150 aa).

It belongs to the NusB family.

Involved in transcription antitermination. Required for transcription of ribosomal RNA (rRNA) genes. Binds specifically to the boxA antiterminator sequence of the ribosomal RNA (rrn) operons. In Streptococcus pyogenes serotype M2 (strain MGAS10270), this protein is Transcription antitermination protein NusB.